The chain runs to 86 residues: uncharacterized protein (86 aa).

A signal peptide spans 1 to 31 (MKQKLLLSGLAVSTVGITSYLLKDPSNRQKA). The disordered stretch occupies residues 46-69 (PDMETFPVDKAGHPDPQDIEDNKM). A compositionally biased stretch (basic and acidic residues) spans 55–69 (KAGHPDPQDIEDNKM).

This is an uncharacterized protein from Bacillus subtilis (strain 168).